The sequence spans 636 residues: Leucine-rich repeat and fibronectin type-III domain-containing protein 4 (636 aa).

A signal peptide spans 1-16 (MAPPLLLLLLASGAAA). The LRRNT domain occupies 17-48 (CPLPCVCQNLSESLSTLCAHRGLLFVPPNVDR). The Extracellular portion of the chain corresponds to 17–518 (CPLPCVCQNL…LQAHVLGGTL (502 aa)). N-linked (GlcNAc...) asparagine glycosylation is present at Asn25. LRR repeat units lie at residues 49–70 (RTVELRLADNFIQALGPPDFRN), 73–94 (GLVDLTLSRNAITRIGARSFGD), 97–118 (SLRSLHLDGNRLVELGSSSLRG), 121–142 (NLQHLILSGNQLGRIAPGAFDD), 146–169 (SLEDLDVSYNNLRQVPWAGIGSMP), 170–191 (ALHTLNLDHNLIDALPPGVFAQ), and 194–215 (QLSRLDLTSNRLATLAPDPLFS). Positions 234 to 280 (NPLHCNCELLWLRRLARPDDLETCASPPTLAGRYFWAVPEGEFSCEP) constitute an LRRCT domain. The Ig-like domain maps to 281-367 (PLIARHTQRL…GEATARVELR (87 aa)). The cysteines at positions 302 and 351 are disulfide-linked. Asn333 is a glycosylation site (N-linked (GlcNAc...) asparagine). The 98-residue stretch at 405–502 (SEPAVQVTEV…GCAHFSTLPA (98 aa)) folds into the Fibronectin type-III domain. A helical transmembrane segment spans residues 519–539 (TVAVGGVLVAALLVFTVALLV). Residues 540 to 636 (RGRGAGNGRL…SAERLEESVV (97 aa)) lie on the Cytoplasmic side of the membrane. A disordered region spans residues 556-585 (VQSQTNGGTSPMPKSHPPRSPPPRPQRSCS). The span at 569–580 (KSHPPRSPPPRP) shows a compositional bias: pro residues. Phosphoserine occurs at positions 585 and 627. The PDZ-binding signature appears at 633-636 (ESVV).

Belongs to the LRFN family. As to quaternary structure, forms heteromeric complexes with LRFN1 and LRFN2. Can form heteromeric complexes with LRFN3 and LRFN5. Unable to form homophilic interactions across cell junctions. Interacts with DLG1, DLG2, DLG3 and DLG4. In terms of processing, glycosylated.

The protein resides in the membrane. Its function is as follows. Promotes neurite outgrowth in hippocampal neurons. May play a role in redistributing DLG4 to the cell periphery. The protein is Leucine-rich repeat and fibronectin type-III domain-containing protein 4 (Lrfn4) of Rattus norvegicus (Rat).